The following is a 194-amino-acid chain: Thymidine kinase (194 aa).

ATP is bound by residues 15-22 (GCMFSGKT) and 88-91 (DELH). Glutamate 89 functions as the Proton acceptor in the catalytic mechanism. Residues cysteine 148, cysteine 151, cysteine 186, and cysteine 189 each contribute to the Zn(2+) site.

The protein belongs to the thymidine kinase family. In terms of assembly, homotetramer.

The protein localises to the cytoplasm. It carries out the reaction thymidine + ATP = dTMP + ADP + H(+). This is Thymidine kinase from Roseiflexus castenholzii (strain DSM 13941 / HLO8).